The sequence spans 782 residues: Translation initiation factor IF-2 (782 aa).

Residues 47 to 196 (DNAIDGTNKK…TPPKPKELPE (150 aa)) form a disordered region. The segment covering 53–65 (TNKKAEAPKKETT) has biased composition (basic and acidic residues). The segment covering 66–81 (SNENGNSKGPNKPNMT) has biased composition (polar residues). Composition is skewed to low complexity over residues 82–93 (NSNEKSNKPNNP) and 118–170 (NTSK…NNKG). The tr-type G domain maps to 283 to 452 (ERPPVVTIMG…LLVSEVEELK (170 aa)). Positions 292 to 299 (GHVDHGKT) are G1. 292–299 (GHVDHGKT) is a binding site for GTP. Residues 317-321 (GITQH) form a G2 region. A G3 region spans residues 338 to 341 (DTPG). GTP-binding positions include 338 to 342 (DTPGH) and 392 to 395 (NKID). The segment at 392-395 (NKID) is G4. Positions 428 to 430 (SAK) are G5.

This sequence belongs to the TRAFAC class translation factor GTPase superfamily. Classic translation factor GTPase family. IF-2 subfamily.

Its subcellular location is the cytoplasm. In terms of biological role, one of the essential components for the initiation of protein synthesis. Protects formylmethionyl-tRNA from spontaneous hydrolysis and promotes its binding to the 30S ribosomal subunits. Also involved in the hydrolysis of GTP during the formation of the 70S ribosomal complex. This Listeria monocytogenes serotype 4b (strain CLIP80459) protein is Translation initiation factor IF-2.